The sequence spans 492 residues: MDPYKYRPSSAFNSPFCTTNSGAPVFNNNSSLTVGARGPVLLEDYHLVEKLANFDRERIAERVVHARGASAKGFFEVTHDIAHLTCADFLRAPGVQTPVIVRFSTVIHERGSPETLRDPRGFAVKFYTREGNFDLVGNNFPVFFIRDGMKFPDMVHALKPNPKSHIQENWRVLDFFSHHPESLHMFTFLFDDIGIPQDYRHMDGSGVHTFTLINRAGKSTYVKFHWKPTCGVKSLLEEKAIRVGGANHSHATQDLYDSIAAGNYPEWKPSIQIMGPEHEDKFDFDPLDVTKTWPEDILPLQPVGRLVLNKNIDNFLYMNEQLAFCPSIVVPGVYYSDDKMLQTRIFSYSDTQRYRLGPNYLQLPANAPKCAHHNNHYDGSMNFMHRDEEIDYFPSRYDQVRHAEVYPIPSTVCSGKREKCIIQKENNFKQPGERYRSFTPDRQERFIRRWVEALSDPRITYEIRSIWITYWSQADKSLGQKLASRLNVRPSI.

Residues H65 and N138 contribute to the active site. Residue Y348 participates in heme binding.

This sequence belongs to the catalase family. In terms of assembly, homotetramer. Heme is required as a cofactor.

The protein resides in the peroxisome. It carries out the reaction 2 H2O2 = O2 + 2 H2O. In terms of biological role, occurs in almost all aerobically respiring organisms and serves to protect cells from the toxic effects of hydrogen peroxide. This is Catalase isozyme 2 (CAT2) from Solanum lycopersicum (Tomato).